A 280-amino-acid chain; its full sequence is MHSLQRKVLRTICPDQKGLIARITNICYKHELNIVQNNEFVDHRTGRFFMRTELEGIFNDSTLLADLDSALPEGSVRELNPAGRRRIVILVTKEAHCLGDLLMKANYGGLDVEIAAVIGNHDTLRSLVERFDIPFELVSHEGLSRNEHDQKMADAIDAYQPDYVVLAKYMRVLTPEFVARFPNKIINIHHSFLPAFIGARPYHQAYERGVKIIGATAHYVNDNLDEGPIIMQDVIHVDHTYTAEDMMRAGRDVEKNVLSRALYKVLAQRVFVYGNRTIIL.

One can recognise an ACT domain in the interval Val-8 to Arg-86. Asp-225 is an active-site residue.

This sequence belongs to the PurU family.

It catalyses the reaction (6R)-10-formyltetrahydrofolate + H2O = (6S)-5,6,7,8-tetrahydrofolate + formate + H(+). Its pathway is purine metabolism; IMP biosynthesis via de novo pathway; formate from 10-formyl-5,6,7,8-tetrahydrofolate: step 1/1. In terms of biological role, catalyzes the hydrolysis of 10-formyltetrahydrofolate (formyl-FH4) to formate and tetrahydrofolate (FH4). This is Formyltetrahydrofolate deformylase from Escherichia coli O6:H1 (strain CFT073 / ATCC 700928 / UPEC).